We begin with the raw amino-acid sequence, 37 residues long: uncharacterized protein (37 aa).

The helical transmembrane segment at Thr-17 to Cys-37 threads the bilayer.

The protein belongs to the SscA family.

Its subcellular location is the membrane. This is an uncharacterized protein from Bacillus subtilis (strain 168).